Consider the following 480-residue polypeptide: Proline--tRNA ligase (480 aa).

This sequence belongs to the class-II aminoacyl-tRNA synthetase family. ProS type 3 subfamily. In terms of assembly, homodimer.

The protein resides in the cytoplasm. It carries out the reaction tRNA(Pro) + L-proline + ATP = L-prolyl-tRNA(Pro) + AMP + diphosphate. Its function is as follows. Catalyzes the attachment of proline to tRNA(Pro) in a two-step reaction: proline is first activated by ATP to form Pro-AMP and then transferred to the acceptor end of tRNA(Pro). The sequence is that of Proline--tRNA ligase from Metallosphaera sedula (strain ATCC 51363 / DSM 5348 / JCM 9185 / NBRC 15509 / TH2).